The following is a 493-amino-acid chain: ATP-dependent RNA helicase dbp3 (493 aa).

Residues 1-38 (MTKRDYQNDTTAESRPTKKSKGEKKVKETKEKKEKKVK) are disordered. Residues 23-34 (EKKVKETKEKKE) are compositionally biased toward basic and acidic residues. Positions 97 to 105 (SFKSPTSIQ) match the Q motif motif. Residues 109–285 (WPLLFGGRDV…STFMSSPVTV (177 aa)) enclose the Helicase ATP-binding domain. 122-129 (AETGSGKT) contributes to the ATP binding site. The DEAD box motif lies at 232–235 (DEAD). The 147-residue stretch at 316-462 (RLVQLLKQHQ…EVPEELLKFG (147 aa)) folds into the Helicase C-terminal domain.

It belongs to the DEAD box helicase family. DDX5/DBP2 subfamily.

It is found in the nucleus. Its subcellular location is the nucleolus. The catalysed reaction is ATP + H2O = ADP + phosphate + H(+). ATP-dependent RNA helicase required for 60S ribosomal subunit synthesis. Involved in efficient pre-rRNA processing, predominantly at site A3, which is necessary for the normal formation of 25S and 5.8S rRNAs. This is ATP-dependent RNA helicase dbp3 (dbp3) from Aspergillus terreus (strain NIH 2624 / FGSC A1156).